We begin with the raw amino-acid sequence, 299 residues long: Acarbose 7(IV)-phosphotransferase (299 aa).

It belongs to the carbohydrate kinase PfkB family.

The catalysed reaction is acarbose + ATP = acarbose 7(IV)-phosphate + ADP + H(+). Its function is as follows. Catalyzes the phosphorylation of the alpha-glucosidase inhibitor acarbose. Phosphorylation of acarbose could be a resistance-like self-protection mechanism. The sequence is that of Acarbose 7(IV)-phosphotransferase from Actinoplanes sp. (strain ATCC 31044 / CBS 674.73 / SE50/110).